Here is a 29-residue protein sequence, read N- to C-terminus: Trypsin inhibitor 5 (29 aa).

Disulfide bonds link cysteine 3-cysteine 20, cysteine 10-cysteine 22, and cysteine 16-cysteine 28.

Belongs to the protease inhibitor I7 (squash-type serine protease inhibitor) family.

The protein localises to the secreted. Strongly inhibits trypsin, weakly inhibits chymotrypsin. The chain is Trypsin inhibitor 5 from Cyclanthera pedata (Achocha).